The chain runs to 136 residues: Peptide methionine sulfoxide reductase MsrB (136 aa).

The MsrB domain occupies 13–135 (ENDWRSKLTP…NSASLDFKDK (123 aa)). 4 residues coordinate Zn(2+): Cys52, Cys55, Cys101, and Cys104. Catalysis depends on Cys124, which acts as the Nucleophile.

The protein belongs to the MsrB Met sulfoxide reductase family. Zn(2+) serves as cofactor.

The enzyme catalyses L-methionyl-[protein] + [thioredoxin]-disulfide + H2O = L-methionyl-(R)-S-oxide-[protein] + [thioredoxin]-dithiol. This chain is Peptide methionine sulfoxide reductase MsrB, found in Synechococcus sp. (strain RCC307).